Reading from the N-terminus, the 1696-residue chain is Proprotein convertase subtilisin/kexin type 5 (1696 aa).

The N-terminal stretch at 1-25 (MPPAIVILALFTAALCAVNLRTVAA) is a signal peptide. The propeptide occupies 26–110 (DGPRIYRNEW…QQVVKRRVKR (85 aa)). A catalytic region spans residues 111–488 (RVKRVYSMYP…GLMDAGKMVE (378 aa)). The Extracellular segment spans residues 111-1618 (RVKRVYSMYP…ADSIPTNVAY (1508 aa)). Positions 167 to 487 (QWSDMNVEAA…FGLMDAGKMV (321 aa)) constitute a Peptidase S8 domain. Catalysis depends on charge relay system residues aspartate 192 and histidine 233. N-linked (GlcNAc...) asparagine glycosylation occurs at asparagine 246. Serine 407 serves as the catalytic Charge relay system. The P/Homo B domain maps to 495–638 (RVPEQHVCEE…KLILYGTAEH (144 aa)). Asparagine 529 is a glycosylation site (N-linked (GlcNAc...) asparagine). The segment covering 643 to 657 (RDEESRPHTPQTREE) has biased composition (basic and acidic residues). Residues 643-666 (RDEESRPHTPQTREEPTDEEECED) form a disordered region. Positions 664–1649 (CEDGDYYDRS…LQARSNGRLC (986 aa)) are CRM (Cys-rich motif). The N-linked (GlcNAc...) asparagine glycan is linked to asparagine 885. Residues 1619–1639 (IAVATFICVVIVVLFFVVFGM) traverse the membrane as a helical segment. The Cytoplasmic segment spans residues 1640 to 1696 (LQARSNGRLCWAHKYQQVPTTRYEKMNDHVNILSQEDFYNEDSLSEDEIHSIDSTRH).

The protein belongs to the peptidase S8 family.

Its subcellular location is the secreted. The protein resides in the cell membrane. Its function is as follows. Serine endoprotease that processes various proproteins by cleavage at paired basic amino acids, recognizing the RXXX[KR]R consensus motif. Likely functions in the constitutive and regulated secretory pathways. This is Proprotein convertase subtilisin/kexin type 5 (PC6) from Branchiostoma californiense (California lancelet).